The following is a 304-amino-acid chain: Sulfate adenylyltransferase subunit 2 (304 aa).

This sequence belongs to the PAPS reductase family. CysD subfamily. In terms of assembly, heterodimer composed of CysD, the smaller subunit, and CysNC.

The catalysed reaction is sulfate + ATP + H(+) = adenosine 5'-phosphosulfate + diphosphate. The protein operates within sulfur metabolism; hydrogen sulfide biosynthesis; sulfite from sulfate: step 1/3. With CysN forms the ATP sulfurylase (ATPS) that catalyzes the adenylation of sulfate producing adenosine 5'-phosphosulfate (APS) and diphosphate, the first enzymatic step in sulfur assimilation pathway. APS synthesis involves the formation of a high-energy phosphoric-sulfuric acid anhydride bond driven by GTP hydrolysis by CysN coupled to ATP hydrolysis by CysD. The sequence is that of Sulfate adenylyltransferase subunit 2 from Xylella fastidiosa (strain 9a5c).